Here is a 135-residue protein sequence, read N- to C-terminus: uncharacterized protein (135 aa).

This sequence belongs to the MG067/MG068/MG395 family.

This is an uncharacterized protein from Mycoplasma pneumoniae (strain ATCC 29342 / M129 / Subtype 1) (Mycoplasmoides pneumoniae).